A 215-amino-acid chain; its full sequence is Large ribosomal subunit protein bL25 (215 aa).

Residues 160–215 (GDLPLPEGSELVTEPEETVMSVVAPETEEEPDTEEDEEGEEDVEEESEEEEEESEE) form a disordered region. A compositionally biased stretch (acidic residues) spans 185 to 215 (ETEEEPDTEEDEEGEEDVEEESEEEEEESEE).

This sequence belongs to the bacterial ribosomal protein bL25 family. CTC subfamily. In terms of assembly, part of the 50S ribosomal subunit; part of the 5S rRNA/L5/L18/L25 subcomplex. Contacts the 5S rRNA. Binds to the 5S rRNA independently of L5 and L18.

Functionally, this is one of the proteins that binds to the 5S RNA in the ribosome where it forms part of the central protuberance. This Natranaerobius thermophilus (strain ATCC BAA-1301 / DSM 18059 / JW/NM-WN-LF) protein is Large ribosomal subunit protein bL25.